The sequence spans 250 residues: Imidazole glycerol phosphate synthase subunit HisF (250 aa).

Catalysis depends on residues D11 and D130.

It belongs to the HisA/HisF family. Heterodimer of HisH and HisF.

Its subcellular location is the cytoplasm. It carries out the reaction 5-[(5-phospho-1-deoxy-D-ribulos-1-ylimino)methylamino]-1-(5-phospho-beta-D-ribosyl)imidazole-4-carboxamide + L-glutamine = D-erythro-1-(imidazol-4-yl)glycerol 3-phosphate + 5-amino-1-(5-phospho-beta-D-ribosyl)imidazole-4-carboxamide + L-glutamate + H(+). It participates in amino-acid biosynthesis; L-histidine biosynthesis; L-histidine from 5-phospho-alpha-D-ribose 1-diphosphate: step 5/9. In terms of biological role, IGPS catalyzes the conversion of PRFAR and glutamine to IGP, AICAR and glutamate. The HisF subunit catalyzes the cyclization activity that produces IGP and AICAR from PRFAR using the ammonia provided by the HisH subunit. In Elusimicrobium minutum (strain Pei191), this protein is Imidazole glycerol phosphate synthase subunit HisF.